Reading from the N-terminus, the 240-residue chain is Glutathione S-transferase U9 (240 aa).

The region spanning 7–86 (NKVILHGSFA…YIDETWSNGP (80 aa)) is the GST N-terminal domain. Residues 17-18 (SP), 43-44 (NK), 57-58 (KI), and 70-71 (ES) contribute to the glutathione site. In terms of domain architecture, GST C-terminal spans 92–226 (DPYRRSKVRF…EQILEILRAF (135 aa)). Threonine 161 carries the post-translational modification Phosphothreonine.

This sequence belongs to the GST superfamily. Tau family.

The protein localises to the cytoplasm. The protein resides in the cytosol. The catalysed reaction is RX + glutathione = an S-substituted glutathione + a halide anion + H(+). May be involved in the conjugation of reduced glutathione to a wide number of exogenous and endogenous hydrophobic electrophiles and have a detoxification role against certain herbicides. This chain is Glutathione S-transferase U9 (GSTU9), found in Arabidopsis thaliana (Mouse-ear cress).